Consider the following 247-residue polypeptide: 2,3-bisphosphoglycerate-dependent phosphoglycerate mutase (247 aa).

Residues 8-15 (RHGESQWN), 21-22 (TG), arginine 60, 87-90 (ERHY), lysine 98, 114-115 (RR), and 183-184 (GN) contribute to the substrate site. Histidine 9 acts as the Tele-phosphohistidine intermediate in catalysis. Glutamate 87 functions as the Proton donor/acceptor in the catalytic mechanism.

This sequence belongs to the phosphoglycerate mutase family. BPG-dependent PGAM subfamily.

It carries out the reaction (2R)-2-phosphoglycerate = (2R)-3-phosphoglycerate. The protein operates within carbohydrate degradation; glycolysis; pyruvate from D-glyceraldehyde 3-phosphate: step 3/5. Catalyzes the interconversion of 2-phosphoglycerate and 3-phosphoglycerate. In Prosthecochloris aestuarii (strain DSM 271 / SK 413), this protein is 2,3-bisphosphoglycerate-dependent phosphoglycerate mutase.